Here is a 306-residue protein sequence, read N- to C-terminus: Pantothenate kinase (306 aa).

Residue 91–98 (GSVAVGKS) participates in ATP binding.

The protein belongs to the prokaryotic pantothenate kinase family.

Its subcellular location is the cytoplasm. It catalyses the reaction (R)-pantothenate + ATP = (R)-4'-phosphopantothenate + ADP + H(+). It participates in cofactor biosynthesis; coenzyme A biosynthesis; CoA from (R)-pantothenate: step 1/5. The sequence is that of Pantothenate kinase from Streptococcus mutans serotype c (strain ATCC 700610 / UA159).